The chain runs to 320 residues: uncharacterized protein (320 aa).

Belongs to the NAD(P)-dependent epimerase/dehydratase family.

This is an uncharacterized protein from Staphylococcus saprophyticus subsp. saprophyticus (strain ATCC 15305 / DSM 20229 / NCIMB 8711 / NCTC 7292 / S-41).